Here is a 564-residue protein sequence, read N- to C-terminus: Arrestin domain-containing protein E (564 aa).

The span at Ser-74–Asn-146 shows a compositional bias: low complexity. Disordered stretches follow at residues Ser-74–Asn-150 and Ala-245–Ser-286. Residues Pro-250–Gln-259 are compositionally biased toward pro residues. A compositionally biased stretch (low complexity) spans Gln-260–Gln-269. A compositionally biased stretch (polar residues) spans Ser-270–Pro-285. One can recognise an LIM zinc-binding domain in the interval Asp-348–Leu-413.

This is Arrestin domain-containing protein E (adcE) from Dictyostelium discoideum (Social amoeba).